The primary structure comprises 292 residues: 2-(5''-triphosphoribosyl)-3'-dephosphocoenzyme-A synthase (292 aa).

Belongs to the CitG/MdcB family.

The catalysed reaction is 3'-dephospho-CoA + ATP = 2'-(5''-triphospho-alpha-D-ribosyl)-3'-dephospho-CoA + adenine. Its function is as follows. Catalyzes the formation of 2-(5''-triphosphoribosyl)-3'-dephosphocoenzyme-A, the precursor of the prosthetic group of the holo-acyl carrier protein (gamma chain) of citrate lyase, from ATP and dephospho-CoA. This Escherichia coli O139:H28 (strain E24377A / ETEC) protein is 2-(5''-triphosphoribosyl)-3'-dephosphocoenzyme-A synthase.